The sequence spans 100 residues: Large ribosomal subunit protein uL23 (100 aa).

It belongs to the universal ribosomal protein uL23 family. As to quaternary structure, part of the 50S ribosomal subunit. Contacts protein L29, and trigger factor when it is bound to the ribosome.

One of the early assembly proteins it binds 23S rRNA. One of the proteins that surrounds the polypeptide exit tunnel on the outside of the ribosome. Forms the main docking site for trigger factor binding to the ribosome. This is Large ribosomal subunit protein uL23 from Photorhabdus laumondii subsp. laumondii (strain DSM 15139 / CIP 105565 / TT01) (Photorhabdus luminescens subsp. laumondii).